The primary structure comprises 226 residues: Sugar fermentation stimulation protein homolog (226 aa).

It belongs to the SfsA family.

This is Sugar fermentation stimulation protein homolog from Picrophilus torridus (strain ATCC 700027 / DSM 9790 / JCM 10055 / NBRC 100828 / KAW 2/3).